The primary structure comprises 118 residues: Large ribosomal subunit protein bL17 (118 aa).

Belongs to the bacterial ribosomal protein bL17 family. In terms of assembly, part of the 50S ribosomal subunit. Contacts protein L32.

The protein is Large ribosomal subunit protein bL17 of Onion yellows phytoplasma (strain OY-M).